A 667-amino-acid polypeptide reads, in one-letter code: High affinity sulfate transporter 1 (667 aa).

Positions 16–38 are disordered; it reads ETRSNSSSHRHGGGGGGDDTTSL. A run of 11 helical transmembrane segments spans residues 106–126, 131–151, 156–176, 185–205, 208–228, 269–289, 296–316, 350–370, 425–445, 452–472, and 486–506; these read GDFI…LAYA, LDPW…AFMG, IAIG…SNEI, LRLA…LGVC, GFLI…GAAI, WETI…KYIA, FWVS…FVYI, GAGV…AIAI, VSNI…TPLF, VLAS…AMVL, and GAFF…AVAI. One can recognise an STAS domain in the interval 537 to 660; the sequence is QYPKAAQIPG…LTVADAVATY (124 aa).

This sequence belongs to the SLC26A/SulP transporter (TC 2.A.53) family.

The protein localises to the membrane. Its function is as follows. High-affinity H(+)/sulfate cotransporter that mediates the uptake of sulfate by plant roots from low concentrations of sulfate in the soil solution. In Stylosanthes hamata (Caribbean stylo), this protein is High affinity sulfate transporter 1 (ST1).